A 223-amino-acid polypeptide reads, in one-letter code: Thymine-DNA glycosylase (223 aa).

Positions 201, 208, 211, and 217 each coordinate [4Fe-4S] cluster.

Belongs to the Nth/MutY family. It depends on [4Fe-4S] cluster as a cofactor.

The catalysed reaction is Hydrolyzes mismatched double-stranded DNA and polynucleotides, releasing free thymine.. Thymine cleavage is completely inhibited by Ni(2+), Co(2+), Zn(2+), Cu(2+) and Mn(2+). Activity is not affected by Mg(2+) and Ca(2+). In terms of biological role, DNA glycosylase that excises thymine from T/G mismatches. Also has a weak DNA glycosylase activity on uracil paired with various bases. In Aeropyrum pernix (strain ATCC 700893 / DSM 11879 / JCM 9820 / NBRC 100138 / K1), this protein is Thymine-DNA glycosylase.